The chain runs to 714 residues: Elongation factor G-like protein (714 aa).

The tr-type G domain maps to Gly21–Met289. A G1 region spans residues Gly30–Thr37. Gly30 to Thr37 provides a ligand contact to GTP. The tract at residues Gln73 to Gly77 is G2. A G3 region spans residues Asp94–Gly97. GTP contacts are provided by residues Asp94–Tyr98 and Thr148–Asp151. Positions Thr148–Asp151 are G4. Residues Cys267 to Ser269 are G5.

This sequence belongs to the TRAFAC class translation factor GTPase superfamily. Classic translation factor GTPase family. EF-G/EF-2 subfamily.

The chain is Elongation factor G-like protein from Mycobacterium tuberculosis (strain CDC 1551 / Oshkosh).